The chain runs to 485 residues: Ribulose bisphosphate carboxylase large chain 2 (485 aa).

The substrate site is built by N124 and T174. The active-site Proton acceptor is the K176. K178 is a substrate binding site. K202, D204, and E205 together coordinate Mg(2+). K202 is subject to N6-carboxylysine. H294 functions as the Proton acceptor in the catalytic mechanism. R295, H327, and S379 together coordinate substrate.

The protein belongs to the RuBisCO large chain family. Type I subfamily. As to quaternary structure, heterohexadecamer of 8 large chains and 8 small chains. Mg(2+) serves as cofactor.

The catalysed reaction is 2 (2R)-3-phosphoglycerate + 2 H(+) = D-ribulose 1,5-bisphosphate + CO2 + H2O. It catalyses the reaction D-ribulose 1,5-bisphosphate + O2 = 2-phosphoglycolate + (2R)-3-phosphoglycerate + 2 H(+). RuBisCO catalyzes two reactions: the carboxylation of D-ribulose 1,5-bisphosphate, the primary event in carbon dioxide fixation, as well as the oxidative fragmentation of the pentose substrate. Both reactions occur simultaneously and in competition at the same active site. This is Ribulose bisphosphate carboxylase large chain 2 from Rhodopseudomonas palustris (strain BisB5).